The primary structure comprises 467 residues: Asparagine--tRNA ligase (467 aa).

This sequence belongs to the class-II aminoacyl-tRNA synthetase family. Homodimer.

It is found in the cytoplasm. The catalysed reaction is tRNA(Asn) + L-asparagine + ATP = L-asparaginyl-tRNA(Asn) + AMP + diphosphate + H(+). The polypeptide is Asparagine--tRNA ligase (Mannheimia succiniciproducens (strain KCTC 0769BP / MBEL55E)).